The sequence spans 554 residues: uncharacterized protein (554 aa).

An N-terminal signal peptide occupies residues Met1–Ser33.

This is an uncharacterized protein from Rickettsia prowazekii (strain Madrid E).